We begin with the raw amino-acid sequence, 350 residues long: Leucine-rich repeat-containing protein 58 (350 aa).

LRR repeat units follow at residues 14-34 (NLTHLGLENLNLELVSENKRK), 35-56 (DVQQILLPHNRLVVLPPLVASF), 58-80 (HLHLLDISNNNMVYIGEEILGLT), 81-102 (KLKTLLAKNNRLDEFSFPKEMG), 105-125 (RLEVLNLSGNRFEEIPDQFLQ), 128-149 (TLKSLSLGGNRLKSIPAEIENL), 151-173 (SLEFLYLGGNFISSIPSELANLP), 174-195 (YLSYLVLCDNRIQSIPPQLAQV), 197-218 (SLRSLSLHNNLLTYLPREILSL), and 220-240 (HLHELSLRGNPLVVRFVRDLT).

The protein is Leucine-rich repeat-containing protein 58 (lrrc58) of Xenopus laevis (African clawed frog).